A 425-amino-acid polypeptide reads, in one-letter code: CinA-like protein (425 aa).

Belongs to the CinA family.

The polypeptide is CinA-like protein (Desulfovibrio desulfuricans (strain ATCC 27774 / DSM 6949 / MB)).